We begin with the raw amino-acid sequence, 338 residues long: Phosphate acyltransferase (338 aa).

It belongs to the PlsX family. In terms of assembly, homodimer. Probably interacts with PlsY.

Its subcellular location is the cytoplasm. It catalyses the reaction a fatty acyl-[ACP] + phosphate = an acyl phosphate + holo-[ACP]. Its pathway is lipid metabolism; phospholipid metabolism. Functionally, catalyzes the reversible formation of acyl-phosphate (acyl-PO(4)) from acyl-[acyl-carrier-protein] (acyl-ACP). This enzyme utilizes acyl-ACP as fatty acyl donor, but not acyl-CoA. This Gloeobacter violaceus (strain ATCC 29082 / PCC 7421) protein is Phosphate acyltransferase.